Consider the following 489-residue polypeptide: uncharacterized protein (489 aa).

Helical transmembrane passes span 1–21, 40–60, 74–94, 117–137, 158–178, 188–208, 234–254, 271–291, 318–338, 362–382, 388–408, 422–442, and 456–476; these read MNAA…LGIR, FGTV…FTFL, FYII…LPAV, PLLG…YLVL, AAIW…GIHG, IMIL…YYGG, AWFS…PHTF, IIMP…FAAI, FVGI…SMIL, VSAL…YFTF, IVTL…ALLF, FAGI…ETTI, and LNVG…VSLM.

Belongs to the sodium:solute symporter (SSF) (TC 2.A.21) family.

Its subcellular location is the cell membrane. This is an uncharacterized protein from Bacillus subtilis (strain 168).